The chain runs to 125 residues: Large ribosomal subunit protein bL12 (125 aa).

In terms of assembly, homodimer. Part of the ribosomal stalk of the 50S ribosomal subunit. Forms a multimeric L10(L12)X complex, where L10 forms an elongated spine to which 2 to 4 L12 dimers bind in a sequential fashion. Binds GTP-bound translation factors. Two isoforms seem to exist. One is probably dimethylated on Lys-69 and monomethylated on Lys-86 while the other is probably acetylated or trimethylated on both Lys-86 and Lys-89.

Its function is as follows. Forms part of the ribosomal stalk which helps the ribosome interact with GTP-bound translation factors. Is thus essential for accurate translation. In Rhodopseudomonas palustris (strain ATCC BAA-98 / CGA009), this protein is Large ribosomal subunit protein bL12.